Here is a 650-residue protein sequence, read N- to C-terminus: AP-1-like transcription factor YAP1 (650 aa).

A disordered region spans residues 1–89; the sequence is MSVSTAKRSL…AFRERKERKM (89 aa). Ser9, Ser14, and Ser17 each carry phosphoserine. 3 stretches are compositionally biased toward basic and acidic residues: residues 22–50, 58–68, and 80–89; these read EGSK…EQPK, KKQDLDPETKQ, and AFRERKERKM. Short sequence motifs (bipartite nuclear localization signal) lie at residues 35 to 42 and 68 to 75; these read HRRTGTRD and QKRTAQNR. A bZIP domain is found at 64-127; it reads PETKQKRTAQ…ITLVNELKKY (64 aa). Residues 67-90 form a basic motif region; that stretch reads KQKRTAQNRAAQRAFRERKERKMK. Residues 92 to 120 form a leucine-zipper region; that stretch reads LEKKVQSLESIQQQNEVEATFLRDQLITL. 2 disordered regions span residues 149–169 and 183–251; these read HFSK…PNDD and QYPL…PNSS. The segment covering 150 to 162 has biased composition (polar residues); that stretch reads FSKNNVNHSNSEP. The residue at position 165 (Thr165) is a Phosphothreonine. Residues 195-209 show a composition bias toward polar residues; the sequence is SKNVGKQLPSPNDPS. Ser204 carries the phosphoserine modification. Residues 220–378 form a transcription activation 1 region; sequence QKKLSDATDS…YENSFSGFGR (159 aa). Low complexity predominate over residues 226 to 246; that stretch reads ATDSSSATLDSLSNSNDVLNN. The tract at residues 303-315 is n-CRD; the sequence is CSKMNQVCGTRQC. Intrachain disulfides connect Cys303/Cys598, Cys310/Cys629, Cys598/Cys620, Cys598/Cys629, and Cys620/Cys629. At Ser372 the chain carries Phosphoserine. Positions 392-414 are enriched in low complexity; that stretch reads DNSTGSTDSTGSTGNKNKKNNNN. Disordered stretches follow at residues 392–419, 510–532, and 551–591; these read DNST…DDVL, LFGE…DDES, and LQSV…VPSK. A transcription activation 2 region spans residues 430-537; that stretch reads NQVTNFFSPG…SDDESSLIKN (108 aa). Position 528 is a phosphoserine (Ser528). Polar residues predominate over residues 551–570; the sequence is LQSVPGNESEISQKNGSSLQ. The span at 571–580 shows a compositional bias: low complexity; sequence NADKINNGND. Positions 598-629 are c-CRD; the sequence is CSEIWDRITTHPKYSDIDVDGLCSELMAKAKC. A Nuclear export signal motif is present at residues 614-621; sequence IDVDGLCS.

Belongs to the bZIP family. YAP subfamily. In terms of assembly, interacts independent of oxidation state in the cytoplasm with the karyopherin PSE1/KAP121 (and less strongly with KAP123). The reduced form of YAP1 interacts in the nucleus with the nuclear export protein CRM1, and in the cytoplasm with YBP1 and the peroxiredoxin HYR1/GPX3/ORP1. Interacts with RBG1. Depending on the oxidative stress inducing agent, YAP1 can undergo two distinct conformational changes, both involving disulfide bond formation, and both masking the nuclear export signal, thus abolishing nuclear export by CRM1/exportin 1. The disulfide stress-inducing agent diamide leads to the formation of one of three possible disulfide bonds in the c-CRD. Peroxide stress induces the formation of the HYR1/GPX3- and YBP1-dependent interdomain disulfide bond between Cys-303 and Cys-598 (causing nuclear localization of YAP1), and the possibly stabilizing bond between Cys-310 and Cys-629 (required for full activity of YAP1).

Its subcellular location is the nucleus. The protein localises to the cytoplasm. Its function is as follows. Transcription activator involved in oxidative stress response and redox homeostasis. Regulates the transcription of genes encoding antioxidant enzymes and components of the cellular thiol-reducing pathways, including the thioredoxin system (TRX2, TRR1), the glutaredoxin system (GSH1, GLR1), superoxide dismutase (SOD1, SOD2), glutathione peroxidase (GPX2), and thiol-specific peroxidases (TSA1, AHP1). The induction of some of these genes requires the cooperative action of both, YAP1 and SKN7. Preferentially binds to promoters with the core binding site 5'-TTA[CG]TAA-3'. Activity of the transcription factor is controlled through oxidation of specific cysteine residues resulting in the alteration of its subcellular location. Oxidative stress (as well as carbon stress, but not increased temperature, acidic pH, or ionic stress) induces nuclear accumulation and as a result YAP1 transcriptional activity. Activation by hydrogen peroxide or thiol-reactive chemicals elicit distinct adaptive gene responses. Nuclear export is restored when disulfide bonds are reduced by thioredoxin (TRX2), whose expression is controlled by YAP1, providing a mechanism for negative autoregulation. When overexpressed, YAP1 confers pleiotropic drug-resistance and increases cellular tolerance to cadmium, iron chelators and zinc. The sequence is that of AP-1-like transcription factor YAP1 from Saccharomyces cerevisiae (strain ATCC 204508 / S288c) (Baker's yeast).